A 432-amino-acid chain; its full sequence is D-amino acid dehydrogenase (432 aa).

Residue 3–17 (VVILGSGVVGVTSAW) participates in FAD binding.

The protein belongs to the DadA oxidoreductase family. FAD is required as a cofactor.

The catalysed reaction is a D-alpha-amino acid + A + H2O = a 2-oxocarboxylate + AH2 + NH4(+). The protein operates within amino-acid degradation; D-alanine degradation; NH(3) and pyruvate from D-alanine: step 1/1. Functionally, oxidative deamination of D-amino acids. This chain is D-amino acid dehydrogenase, found in Citrobacter koseri (strain ATCC BAA-895 / CDC 4225-83 / SGSC4696).